Consider the following 327-residue polypeptide: Zinc transport protein ZntB (327 aa).

The Cytoplasmic segment spans residues 1-273 (MDAIKGSELQ…ARRTYTMSLM (273 aa)). Residues 274-294 (AMVFLPSTFLTGLFGVNLGGI) traverse the membrane as a helical segment. Topologically, residues 295–300 (PGNSWH) are periplasmic. Residues 301 to 321 (LGFSLFCLMLVVVIGGVAWWL) form a helical membrane-spanning segment. Over 322–327 (HRSKWL) the chain is Cytoplasmic.

This sequence belongs to the CorA metal ion transporter (MIT) (TC 1.A.35) family.

It localises to the cell inner membrane. It catalyses the reaction Zn(2+)(out) + H(+)(out) = Zn(2+)(in) + H(+)(in). Zinc transporter. Acts as a Zn(2+):proton symporter, which likely mediates zinc ion uptake. This Klebsiella pneumoniae subsp. pneumoniae (strain ATCC 700721 / MGH 78578) protein is Zinc transport protein ZntB.